The following is a 434-amino-acid chain: MQFIDRCQIKLIAGNGGDGIIAWRREAHYDKGGPAGGSGGKGGNIILVADHNQSTLLSLKYSKIIRASNGDNGKPDLSSGQNGMDKYVKVPIGTTVYDEQTNEVIVDLIRDKQEYIICHGGKGGRGNAAFKSSTLRAPNLYELGDEGEEKTVRLELKYLANVGIVGYPNAGKSTLISKLSNAKPKIANYQFTTLVPILGIVENNDKRLVFADIPGLIENASEGYGLGHDFLRHVERCEVLIHLISMNPLDHDDVIDAYEKIMTELRKYSQLLVNKKMLVVANKMDVEGASENFNKLRSYLAKKGIDISSISAINGDVNNLVDRVFDLYQKTLSTTTETNPFSIPMVAEKVYYYDGEKTIDDDPLDVIKDGENRWIVSSKKLTYWFKKIPQTTLDNITRLGQKIKSLGVEDQLKKMGAKPNDVIVICDYEYLIDE.

The Obg domain occupies M1–L159. The region spanning A160–Q329 is the OBG-type G domain. GTP contacts are provided by residues G166 to S173, F191 to V195, D212 to G215, N282 to D285, and I310 to A312. Residues S173 and T193 each coordinate Mg(2+). Residues E356–E434 enclose the OCT domain.

The protein belongs to the TRAFAC class OBG-HflX-like GTPase superfamily. OBG GTPase family. As to quaternary structure, monomer. It depends on Mg(2+) as a cofactor.

The protein localises to the cytoplasm. An essential GTPase which binds GTP, GDP and possibly (p)ppGpp with moderate affinity, with high nucleotide exchange rates and a fairly low GTP hydrolysis rate. Plays a role in control of the cell cycle, stress response, ribosome biogenesis and in those bacteria that undergo differentiation, in morphogenesis control. This chain is GTPase Obg, found in Mycoplasmoides gallisepticum (strain R(low / passage 15 / clone 2)) (Mycoplasma gallisepticum).